A 155-amino-acid polypeptide reads, in one-letter code: Small ribosomal subunit protein uS7c (155 aa).

This sequence belongs to the universal ribosomal protein uS7 family. As to quaternary structure, part of the 30S ribosomal subunit.

It is found in the plastid. The protein localises to the chloroplast. One of the primary rRNA binding proteins, it binds directly to 16S rRNA where it nucleates assembly of the head domain of the 30S subunit. This Schisandra chinensis (Chinese magnolia vine) protein is Small ribosomal subunit protein uS7c (rps7).